A 329-amino-acid polypeptide reads, in one-letter code: Acetyl-coenzyme A carboxylase carboxyl transferase subunit alpha (329 aa).

Residues 40–294 (QLETLAARRR…KESLIRNLRE (255 aa)) enclose the CoA carboxyltransferase C-terminal domain.

This sequence belongs to the AccA family. In terms of assembly, acetyl-CoA carboxylase is a heterohexamer composed of biotin carboxyl carrier protein (AccB), biotin carboxylase (AccC) and two subunits each of ACCase subunit alpha (AccA) and ACCase subunit beta (AccD).

The protein resides in the cytoplasm. It carries out the reaction N(6)-carboxybiotinyl-L-lysyl-[protein] + acetyl-CoA = N(6)-biotinyl-L-lysyl-[protein] + malonyl-CoA. The protein operates within lipid metabolism; malonyl-CoA biosynthesis; malonyl-CoA from acetyl-CoA: step 1/1. Component of the acetyl coenzyme A carboxylase (ACC) complex. First, biotin carboxylase catalyzes the carboxylation of biotin on its carrier protein (BCCP) and then the CO(2) group is transferred by the carboxyltransferase to acetyl-CoA to form malonyl-CoA. The chain is Acetyl-coenzyme A carboxylase carboxyl transferase subunit alpha from Prochlorococcus marinus (strain MIT 9211).